A 569-amino-acid chain; its full sequence is Urease subunit alpha (569 aa).

Positions 131-569 (GGMDAHIHFI…LPMAQRYFLF (439 aa)) constitute a Urease domain. Ni(2+) is bound by residues histidine 136, histidine 138, and lysine 218. The residue at position 218 (lysine 218) is an N6-carboxylysine. Residue histidine 220 coordinates substrate. Ni(2+) is bound by residues histidine 247 and histidine 273. Histidine 321 functions as the Proton donor in the catalytic mechanism. A Ni(2+)-binding site is contributed by aspartate 361.

It belongs to the metallo-dependent hydrolases superfamily. Urease alpha subunit family. As to quaternary structure, heterotrimer of UreA (gamma), UreB (beta) and UreC (alpha) subunits. Three heterotrimers associate to form the active enzyme. It depends on Ni cation as a cofactor. In terms of processing, carboxylation allows a single lysine to coordinate two nickel ions.

It localises to the cytoplasm. It catalyses the reaction urea + 2 H2O + H(+) = hydrogencarbonate + 2 NH4(+). The protein operates within nitrogen metabolism; urea degradation; CO(2) and NH(3) from urea (urease route): step 1/1. The sequence is that of Urease subunit alpha from Rhizobium rhizogenes (strain K84 / ATCC BAA-868) (Agrobacterium radiobacter).